The primary structure comprises 985 residues: Alpha-glucosidase (985 aa).

Positions 1–25 are cleaved as a signal peptide; that stretch reads MAGLKSFLASSWLLPVACGASQSIV. Asparagine 126, asparagine 145, asparagine 220, asparagine 255, asparagine 349, and asparagine 424 each carry an N-linked (GlcNAc...) asparagine glycan. Aspartate 492 acts as the Nucleophile in catalysis. Glutamate 495 is an active-site residue. 5 N-linked (GlcNAc...) asparagine glycosylation sites follow: asparagine 508, asparagine 536, asparagine 539, asparagine 602, and asparagine 624. The Proton donor role is filled by aspartate 660. N-linked (GlcNAc...) asparagine glycans are attached at residues asparagine 661, asparagine 835, asparagine 881, asparagine 929, and asparagine 957.

It belongs to the glycosyl hydrolase 31 family.

It carries out the reaction Hydrolysis of terminal, non-reducing (1-&gt;4)-linked alpha-D-glucose residues with release of alpha-D-glucose.. In terms of biological role, hydrolyzes malto-oligosaccharides, but has a low activity toward soluble starch. The protein is Alpha-glucosidase (agdA) of Aspergillus oryzae (strain ATCC 42149 / RIB 40) (Yellow koji mold).